Here is an 889-residue protein sequence, read N- to C-terminus: Alanine--tRNA ligase (889 aa).

Positions 574, 578, 682, and 686 each coordinate Zn(2+).

Belongs to the class-II aminoacyl-tRNA synthetase family. Requires Zn(2+) as cofactor.

Its subcellular location is the cytoplasm. It carries out the reaction tRNA(Ala) + L-alanine + ATP = L-alanyl-tRNA(Ala) + AMP + diphosphate. In terms of biological role, catalyzes the attachment of alanine to tRNA(Ala) in a two-step reaction: alanine is first activated by ATP to form Ala-AMP and then transferred to the acceptor end of tRNA(Ala). Also edits incorrectly charged Ser-tRNA(Ala) and Gly-tRNA(Ala) via its editing domain. In Orientia tsutsugamushi (strain Ikeda) (Rickettsia tsutsugamushi), this protein is Alanine--tRNA ligase.